The chain runs to 684 residues: DNA gyrase subunit B, novobiocin-sensitive (684 aa).

Residues 1-22 (MADSGNPNENTPSVATGENGEV) form a disordered region. Positions 154-302 (VKTDGYRWTQ…RMLSVEIAMQ (149 aa)) are novobiocin-binding. One can recognise a Toprim domain in the interval 463–577 (CEIFIVEGDS…AGHVYLSRPP (115 aa)). Positions 469, 542, and 544 each coordinate Mg(2+).

Belongs to the type II topoisomerase GyrB family. Heterotetramer, composed of two GyrA and two GyrB chains. In the heterotetramer, GyrA contains the active site tyrosine that forms a transient covalent intermediate with DNA, while GyrB binds cofactors and catalyzes ATP hydrolysis. Mg(2+) is required as a cofactor. Requires Mn(2+) as cofactor. Ca(2+) serves as cofactor.

It localises to the cytoplasm. It catalyses the reaction ATP-dependent breakage, passage and rejoining of double-stranded DNA.. Functionally, a type II topoisomerase that negatively supercoils closed circular double-stranded (ds) DNA in an ATP-dependent manner to modulate DNA topology and maintain chromosomes in an underwound state. Negative supercoiling favors strand separation, and DNA replication, transcription, recombination and repair, all of which involve strand separation. Also able to catalyze the interconversion of other topological isomers of dsDNA rings, including catenanes and knotted rings. Type II topoisomerases break and join 2 DNA strands simultaneously in an ATP-dependent manner. This is DNA gyrase subunit B, novobiocin-sensitive from Streptomyces niveus (Streptomyces spheroides).